Here is a 313-residue protein sequence, read N- to C-terminus: MSASLGATRFRPDLLSLDDLDEAQLHALLTLAHQLKRGERVANLHGKVLGLVFLKASTRTRVSFTVAMYQLGGQVIDLSPSNTQVGRGEPVRDTARVLGRYVDGLAIRTFAQTELEEYAHYAGIPVINALTDHEHPCQVVADLLTIRENFGRLAGLKLAYVGDGNNVAHSLLLGCAKVGMSIAVATPEGFTPDPAVSARASEIAGRTGAEVQILRDPFEAARGAHILYTDVWTSMGQEAETQHRLQLFEQYQINAALLNCAAAEAIVLHCLPAHRGEEITDEVMEGPRSRIWDEAENRLHAQKAVLAALMGGR.

Carbamoyl phosphate is bound by residues 57–60 (STRT), Gln84, Arg108, and 135–138 (HPCQ). Residues Asn166, Asp230, and 234 to 235 (SM) contribute to the L-ornithine site. Residues 270–271 (CL) and Arg298 contribute to the carbamoyl phosphate site.

It belongs to the aspartate/ornithine carbamoyltransferase superfamily. OTCase family. Homohexamer.

The protein localises to the cytoplasm. The enzyme catalyses carbamoyl phosphate + L-ornithine = L-citrulline + phosphate + H(+). It participates in amino-acid biosynthesis; L-arginine biosynthesis; L-arginine from L-ornithine and carbamoyl phosphate: step 1/3. In terms of biological role, reversibly catalyzes the transfer of the carbamoyl group from carbamoyl phosphate (CP) to the N(epsilon) atom of ornithine (ORN) to produce L-citrulline. The chain is Ornithine carbamoyltransferase from Gloeobacter violaceus (strain ATCC 29082 / PCC 7421).